An 830-amino-acid polypeptide reads, in one-letter code: Envelope glycoprotein B (830 aa).

An N-terminal signal peptide occupies residues 1–22 (MSKMAVLFLAVFLMNSVLMIYC). Over 23–688 (DPDHYIRAGY…GGVVSFLKNP (666 aa)) the chain is Virion surface. Intrachain disulfides connect Cys41–Cys482, Cys58–Cys438, Cys131–Cys197, and Cys290–Cys337. The segment at 98–104 (SYRDVGV) is involved in fusion and/or binding to host membrane. N-linked (GlcNAc...) asparagine; by host glycosylation is present at Asn155. The tract at residues 184-191 (GPLWLYST) is involved in fusion and/or binding to host membrane. Asn228, Asn247, Asn286, Asn307, Asn329, Asn355, Asn361, and Asn486 each carry an N-linked (GlcNAc...) asparagine; by host glycan. A disulfide bridge connects residues Cys510 and Cys548. 2 hydrophobic membrane proximal region regions span residues 634-686 (IEAK…SFLK) and 644-685 (SYVN…VSFL). A helical membrane pass occupies residues 689 to 709 (FGGGLMLILAIVVVVIIIVVF). Topologically, residues 710–830 (VRQRHVLSKP…GYKSVNVEEA (121 aa)) are intravirion. The Internalization motif motif lies at 822 to 825 (YKSV).

The protein belongs to the herpesviridae glycoprotein B family. In terms of assembly, homotrimer; disulfide-linked. Binds to heparan sulfate proteoglycans. Interacts with gH/gL heterodimer. A proteolytic cleavage by host furin generates two subunits that remain linked by disulfide bonds.

Its subcellular location is the virion membrane. It localises to the host cell membrane. The protein localises to the host endosome membrane. It is found in the host Golgi apparatus membrane. Envelope glycoprotein that forms spikes at the surface of virion envelope. Essential for the initial attachment to heparan sulfate moieties of the host cell surface proteoglycans. Involved in fusion of viral and cellular membranes leading to virus entry into the host cell. Following initial binding to its host receptors, membrane fusion is mediated by the fusion machinery composed at least of gB and the heterodimer gH/gL. May be involved in the fusion between the virion envelope and the outer nuclear membrane during virion egress. The protein is Envelope glycoprotein B of Human herpesvirus 6A (strain Uganda-1102) (HHV-6 variant A).